The sequence spans 303 residues: Nucleotide-binding protein Acry_0446 (303 aa).

ATP is bound at residue 10 to 17 (GLSGAGRN). 54-57 (DART) contributes to the GTP binding site.

It belongs to the RapZ-like family.

Functionally, displays ATPase and GTPase activities. This is Nucleotide-binding protein Acry_0446 from Acidiphilium cryptum (strain JF-5).